A 154-amino-acid chain; its full sequence is MYRMQLLSCIALSLALVTNSAPTSSSTKKTQLQLEHLLLDLQMILNGINNYKNPKLTRMLTFKFYMPKKATELKHLQCLEEELRPLEEVLNLAQSKNFHLRDTKDLISNINVIVLELKGSETTLMCEYADETATIVEFLNRWITFCQSIISTLT.

A signal peptide spans 1–20 (MYRMQLLSCIALSLALVTNS). Residue Thr23 is glycosylated (O-linked (GalNAc...) threonine). Cys78 and Cys126 are oxidised to a cystine.

This sequence belongs to the IL-2 family.

The protein resides in the secreted. Its function is as follows. Cytokine produced by activated CD4-positive helper T-cells and to a lesser extend activated CD8-positive T-cells and natural killer (NK) cells that plays pivotal roles in the immune response and tolerance. Binds to a receptor complex composed of either the high-affinity trimeric IL-2R (IL2RA/CD25, IL2RB/CD122 and IL2RG/CD132) or the low-affinity dimeric IL-2R (IL2RB and IL2RG). Interaction with the receptor leads to oligomerization and conformation changes in the IL-2R subunits resulting in downstream signaling starting with phosphorylation of JAK1 and JAK3. In turn, JAK1 and JAK3 phosphorylate the receptor to form a docking site leading to the phosphorylation of several substrates including STAT5. This process leads to activation of several pathways including STAT, phosphoinositide-3-kinase/PI3K and mitogen-activated protein kinase/MAPK pathways. Functions as a T-cell growth factor and can increase NK-cell cytolytic activity as well. Promotes strong proliferation of activated B-cells and subsequently immunoglobulin production. Plays a pivotal role in regulating the adaptive immune system by controlling the survival and proliferation of regulatory T-cells, which are required for the maintenance of immune tolerance. Moreover, participates in the differentiation and homeostasis of effector T-cell subsets, including Th1, Th2, Th17 as well as memory CD8-positive T-cells. The sequence is that of Interleukin-2 (IL2) from Papio anubis (Olive baboon).